Here is a 135-residue protein sequence, read N- to C-terminus: MMQVATSVMVRLFYQKTIEKLKTKQCHNDKEEPIHTQRAYSSSSSSISASLSGSNPWFLLLASSKAFSNNSCCLLTLLLVFLPQPKEVVSAVAASSGLSIRSFDLFSSLSRLSFSTWAANCFFANSLDAIFLKSK.

This is an uncharacterized protein from Saccharomyces cerevisiae (strain ATCC 204508 / S288c) (Baker's yeast).